A 203-amino-acid chain; its full sequence is Glycerol-3-phosphate acyltransferase (203 aa).

The next 5 helical transmembrane spans lie at 2-22 (LATLMFILAYLLGSISSAILV), 54-74 (CLVLIFDVLKGTIPVWGAYFL), 80-100 (ALGLVAVAACLGHMFPLFFGF), 114-134 (LPIGLSLAGLLICTWFIMVAI), and 153-173 (TWLIKPLYTLPVTFITVLIIF).

The protein belongs to the PlsY family. As to quaternary structure, probably interacts with PlsX.

The protein localises to the cell inner membrane. The enzyme catalyses an acyl phosphate + sn-glycerol 3-phosphate = a 1-acyl-sn-glycero-3-phosphate + phosphate. It participates in lipid metabolism; phospholipid metabolism. Its function is as follows. Catalyzes the transfer of an acyl group from acyl-phosphate (acyl-PO(4)) to glycerol-3-phosphate (G3P) to form lysophosphatidic acid (LPA). This enzyme utilizes acyl-phosphate as fatty acyl donor, but not acyl-CoA or acyl-ACP. The protein is Glycerol-3-phosphate acyltransferase of Pseudoalteromonas translucida (strain TAC 125).